The primary structure comprises 294 residues: Large ribosomal subunit protein uL18A (294 aa).

Serine 10 bears the Phosphoserine mark. Residue tyrosine 12 is modified to Phosphotyrosine. At serine 81 the chain carries Phosphoserine.

Belongs to the universal ribosomal protein uL18 family. Component of the large ribosomal subunit (LSU). Mature yeast ribosomes consist of a small (40S) and a large (60S) subunit. The 40S small subunit contains 1 molecule of ribosomal RNA (18S rRNA) and 33 different proteins (encoded by 57 genes). The large 60S subunit contains 3 rRNA molecules (25S, 5.8S and 5S rRNA) and 46 different proteins (encoded by 81 genes). Component of a hexameric 5S RNP precursor complex, composed of 5S RNA, rrs1, rpf2, rpl5a/rpl5b, rpl11a/rpl11b and syo1; this complex acts as a precursor for ribosome assembly. rpl5a/rpl5b/uL18 forms a heterotrimeric complex with syo1 and rpl11a/rpl11b/uL5. Interaction of this complex with KAP104 allows the nuclear import of the heterotrimer.

It localises to the cytoplasm. It is found in the nucleus. Its function is as follows. Component of the ribosome, a large ribonucleoprotein complex responsible for the synthesis of proteins in the cell. The small ribosomal subunit (SSU) binds messenger RNAs (mRNAs) and translates the encoded message by selecting cognate aminoacyl-transfer RNA (tRNA) molecules. The large subunit (LSU) contains the ribosomal catalytic site termed the peptidyl transferase center (PTC), which catalyzes the formation of peptide bonds, thereby polymerizing the amino acids delivered by tRNAs into a polypeptide chain. The nascent polypeptides leave the ribosome through a tunnel in the LSU and interact with protein factors that function in enzymatic processing, targeting, and the membrane insertion of nascent chains at the exit of the ribosomal tunnel. The chain is Large ribosomal subunit protein uL18A (rpl501) from Schizosaccharomyces pombe (strain 972 / ATCC 24843) (Fission yeast).